The sequence spans 594 residues: RAS guanyl-releasing protein 2-B (594 aa).

In terms of domain architecture, N-terminal Ras-GEF spans 3–121 (SSDLDKGLTI…SLIDIESVPS (119 aa)). In terms of domain architecture, Ras-GEF spans 149-382 (DPAELAEHLT…YQLSLQREPR (234 aa)). The disordered stretch occupies residues 377–403 (LQREPRARSTQTHAKSPPSPSPPLEEW). EF-hand domains lie at 418 to 453 (HIEK…FPYL) and 455 to 482 (AFNE…ASSV). Asp431, Asp433, Asp435, His437, Glu442, Asp460, Asn462, Asp464, Lys466, and Glu471 together coordinate Ca(2+). A Phorbol-ester/DAG-type zinc finger spans residues 490–540 (IHNFAERTFLRPVSCQHCRNLILGIYKKGLKCKACGITCHKHCRDHLSIEC).

The protein belongs to the RASGRP family.

It is found in the cytoplasm. The protein resides in the cytosol. It localises to the cell membrane. Its subcellular location is the synapse. The protein localises to the synaptosome. Functions as a calcium- and DAG-regulated nucleotide exchange factor specifically activating Rap through the exchange of bound GDP for GTP. May function in cell aggregation and adhesion. The protein is RAS guanyl-releasing protein 2-B (rasgrp2-b) of Xenopus laevis (African clawed frog).